The primary structure comprises 122 residues: Large ribosomal subunit protein uL14 (122 aa).

Belongs to the universal ribosomal protein uL14 family. In terms of assembly, part of the 50S ribosomal subunit. Forms a cluster with proteins L3 and L19. In the 70S ribosome, L14 and L19 interact and together make contacts with the 16S rRNA in bridges B5 and B8.

Its function is as follows. Binds to 23S rRNA. Forms part of two intersubunit bridges in the 70S ribosome. This chain is Large ribosomal subunit protein uL14, found in Cyanothece sp. (strain PCC 7425 / ATCC 29141).